The primary structure comprises 224 residues: N-(5'-phosphoribosyl)anthranilate isomerase (224 aa).

The protein belongs to the TrpF family.

The catalysed reaction is N-(5-phospho-beta-D-ribosyl)anthranilate = 1-(2-carboxyphenylamino)-1-deoxy-D-ribulose 5-phosphate. It participates in amino-acid biosynthesis; L-tryptophan biosynthesis; L-tryptophan from chorismate: step 3/5. The chain is N-(5'-phosphoribosyl)anthranilate isomerase from Allorhizobium ampelinum (strain ATCC BAA-846 / DSM 112012 / S4) (Agrobacterium vitis (strain S4)).